The following is a 757-amino-acid chain: Polyribonucleotide nucleotidyltransferase (757 aa).

Mg(2+) is bound by residues Asp-482 and Asp-488. Residues 549–608 (PRMLSFYIDKDKISAAIGSKGKNIRSVCERSNAKIEIGDDGKVSVFATSGTEAEIAKSMM) enclose the KH domain. The S1 motif domain occupies 618–686 (GSIVDVKVVR…KGGCPKLSRR (69 aa)). The segment covering 703 to 714 (EERKDGPNDRDN) has biased composition (basic and acidic residues). The tract at residues 703-757 (EERKDGPNDRDNYYNNSFSRKPGGSHHKRPPRPRSGFSNRNRPKFGNNDSSSGFY) is disordered. Residues 725 to 734 (GGSHHKRPPR) show a composition bias toward basic residues.

This sequence belongs to the polyribonucleotide nucleotidyltransferase family. It depends on Mg(2+) as a cofactor.

Its subcellular location is the cytoplasm. It carries out the reaction RNA(n+1) + phosphate = RNA(n) + a ribonucleoside 5'-diphosphate. Involved in mRNA degradation. Catalyzes the phosphorolysis of single-stranded polyribonucleotides processively in the 3'- to 5'-direction. The chain is Polyribonucleotide nucleotidyltransferase from Wolbachia sp. subsp. Drosophila simulans (strain wRi).